The sequence spans 276 residues: uncharacterized protein (276 aa).

The region spanning 20–137 is the AB hydrolase-1 domain; the sequence is PVLIFIPGAN…PPINTFLPDS (118 aa).

This sequence belongs to the AB hydrolase superfamily.

This is an uncharacterized protein from Staphylococcus aureus (strain MRSA252).